A 289-amino-acid polypeptide reads, in one-letter code: GTPase Era (289 aa).

Positions 2-167 (KSGFVSIIGR…LDEICKLLPE (166 aa)) constitute an Era-type G domain. The G1 stretch occupies residues 10–17 (GRTNAGKS). 10–17 (GRTNAGKS) is a GTP binding site. The segment at 36-40 (NATRR) is G2. A G3 region spans residues 57–60 (DTPG). Residues 57-61 (DTPGL) and 116-119 (TKVD) each bind GTP. The G4 stretch occupies residues 116 to 119 (TKVD). Positions 146–148 (FST) are G5. A KH type-2 domain is found at 194–274 (IYENLSDEIP…FLKLDVVVKK (81 aa)).

The protein belongs to the TRAFAC class TrmE-Era-EngA-EngB-Septin-like GTPase superfamily. Era GTPase family. As to quaternary structure, monomer.

It localises to the cytoplasm. It is found in the cell inner membrane. In terms of biological role, an essential GTPase that binds both GDP and GTP, with rapid nucleotide exchange. Plays a role in 16S rRNA processing and 30S ribosomal subunit biogenesis and possibly also in cell cycle regulation and energy metabolism. The sequence is that of GTPase Era from Campylobacter concisus (strain 13826).